The following is a 179-amino-acid chain: Large ribosomal subunit protein uL6 (179 aa).

Belongs to the universal ribosomal protein uL6 family. As to quaternary structure, part of the 50S ribosomal subunit.

Functionally, this protein binds to the 23S rRNA, and is important in its secondary structure. It is located near the subunit interface in the base of the L7/L12 stalk, and near the tRNA binding site of the peptidyltransferase center. This chain is Large ribosomal subunit protein uL6, found in Crocosphaera subtropica (strain ATCC 51142 / BH68) (Cyanothece sp. (strain ATCC 51142)).